We begin with the raw amino-acid sequence, 430 residues long: Histidine--tRNA ligase, chloroplastic (430 aa).

Belongs to the class-II aminoacyl-tRNA synthetase family.

The protein resides in the plastid. The protein localises to the chloroplast. It catalyses the reaction tRNA(His) + L-histidine + ATP = L-histidyl-tRNA(His) + AMP + diphosphate + H(+). The protein is Histidine--tRNA ligase, chloroplastic of Pyropia yezoensis (Susabi-nori).